A 380-amino-acid chain; its full sequence is Lipid-A-disaccharide synthase (380 aa).

The protein belongs to the LpxB family.

The catalysed reaction is a lipid X + a UDP-2-N,3-O-bis[(3R)-3-hydroxyacyl]-alpha-D-glucosamine = a lipid A disaccharide + UDP + H(+). Its pathway is bacterial outer membrane biogenesis; LPS lipid A biosynthesis. Its function is as follows. Condensation of UDP-2,3-diacylglucosamine and 2,3-diacylglucosamine-1-phosphate to form lipid A disaccharide, a precursor of lipid A, a phosphorylated glycolipid that anchors the lipopolysaccharide to the outer membrane of the cell. This is Lipid-A-disaccharide synthase from Azotobacter vinelandii (strain DJ / ATCC BAA-1303).